A 129-amino-acid chain; its full sequence is Small ribosomal subunit protein uS11c (129 aa).

The protein belongs to the universal ribosomal protein uS11 family. In terms of assembly, part of the 30S ribosomal subunit.

The protein resides in the plastid. It localises to the chloroplast. The chain is Small ribosomal subunit protein uS11c from Pleurastrum terricola (Filamentous green alga).